The chain runs to 400 residues: FPYQGSSIILESGNVNDYEVVYPRKVTALPKGAVQQKYEDAMQYEFKVNGEPVVLHLEKNKGLFSKDYSEIHYSPDGRRITTHPLVEDHCYYRGHIRNDADSTASISACNGLKGHFKLRGETYLIEPMKISNSEAHAVYKYENVEKEDEAHKMCGVTQNWESYEPIKKASQLIVSTEFQKYMEIVIVVDHSMYTKHKGDSDKIKAWVYEMINTISESYRYLYIDIIVSALEMWSEKDLINVETSAENTLKSFGEWRAKDLIHRISHDNAQLLTATDFDGPTIGLAYVASMCDPKRSVGVVQDHSSVNHLVAITLAHEIAHNLGVHHDKSSCSCGSGYTCIMSPVINSEVIKYFSDCSYIQCREYISKENPPCILNKPLRTDTVSTPVSGNELLEAGKDYD.

Residues 1 to 6 (FPYQGS) form the signal peptide. The propeptide occupies 7-176 (SIILESGNVN…KKASQLIVST (170 aa)). The 198-residue stretch at 180 to 377 (KYMEIVIVVD…ENPPCILNKP (198 aa)) folds into the Peptidase M12B domain. Glu-183 and Asp-267 together coordinate Ca(2+). Intrachain disulfides connect Cys-291-Cys-372, Cys-331-Cys-356, and Cys-333-Cys-339. Residue His-316 coordinates Zn(2+). The active site involves Glu-317. Positions 320 and 326 each coordinate Zn(2+). Residues Cys-372, Asn-375, Val-387, Asn-390, Leu-392, Glu-394, and Asp-400 each coordinate Ca(2+). A propeptide spanning residues 378-400 (LRTDTVSTPVSGNELLEAGKDYD) is cleaved from the precursor.

It belongs to the venom metalloproteinase (M12B) family. P-I subfamily. In terms of assembly, monomer. Zn(2+) serves as cofactor. In terms of tissue distribution, expressed by the venom gland.

The protein localises to the secreted. Functionally, snake venom metalloproteinase that impairs hemostasis in the envenomed animal. This Deinagkistrodon acutus (Hundred-pace snake) protein is Snake venom metalloproteinase H3.